We begin with the raw amino-acid sequence, 292 residues long: Proteasome subunit beta (292 aa).

Positions 1–62 are cleaved as a propeptide — removed in mature form; by autocatalysis; it reads MSESLGSVPG…HRAADDIPHG (62 aa). The active-site Nucleophile is the Thr63.

It belongs to the peptidase T1B family. As to quaternary structure, the 20S proteasome core is composed of 14 alpha and 14 beta subunits that assemble into four stacked heptameric rings, resulting in a barrel-shaped structure. The two inner rings, each composed of seven catalytic beta subunits, are sandwiched by two outer rings, each composed of seven alpha subunits. The catalytic chamber with the active sites is on the inside of the barrel. Has a gated structure, the ends of the cylinder being occluded by the N-termini of the alpha-subunits. Is capped by the proteasome-associated ATPase, ARC.

Its subcellular location is the cytoplasm. It carries out the reaction Cleavage of peptide bonds with very broad specificity.. The protein operates within protein degradation; proteasomal Pup-dependent pathway. Its activity is regulated as follows. The formation of the proteasomal ATPase ARC-20S proteasome complex, likely via the docking of the C-termini of ARC into the intersubunit pockets in the alpha-rings, may trigger opening of the gate for substrate entry. Interconversion between the open-gate and close-gate conformations leads to a dynamic regulation of the 20S proteasome proteolysis activity. Its function is as follows. Component of the proteasome core, a large protease complex with broad specificity involved in protein degradation. This chain is Proteasome subunit beta, found in Gordonia bronchialis (strain ATCC 25592 / DSM 43247 / BCRC 13721 / JCM 3198 / KCTC 3076 / NBRC 16047 / NCTC 10667) (Rhodococcus bronchialis).